The primary structure comprises 117 residues: uncharacterized protein (117 aa).

The stretch at 5–50 (DKIHNTNEQITALEKKKYQIETTLLEKQRDLLKLETQQNKAKLELL) forms a coiled coil.

This is an uncharacterized protein from Bacillus pumilus (Bacillus mesentericus).